We begin with the raw amino-acid sequence, 229 residues long: Large ribosomal subunit protein uL1 (229 aa).

Belongs to the universal ribosomal protein uL1 family. In terms of assembly, part of the 50S ribosomal subunit.

Binds directly to 23S rRNA. The L1 stalk is quite mobile in the ribosome, and is involved in E site tRNA release. Functionally, protein L1 is also a translational repressor protein, it controls the translation of the L11 operon by binding to its mRNA. The chain is Large ribosomal subunit protein uL1 from Streptococcus agalactiae serotype Ia (strain ATCC 27591 / A909 / CDC SS700).